The chain runs to 498 residues: Ribulose bisphosphate carboxylase large chain (498 aa).

Residues 1 to 2 (MS) constitute a propeptide that is removed on maturation. Position 3 is an N-acetylproline (Pro3). N6,N6,N6-trimethyllysine is present on Lys14. Substrate contacts are provided by Asn123 and Thr173. Catalysis depends on Lys175, which acts as the Proton acceptor. Lys177 contacts substrate. Residues Lys201, Asp203, and Glu204 each contribute to the Mg(2+) site. N6-carboxylysine is present on Lys201. The active-site Proton acceptor is His294. Positions 295, 327, and 379 each coordinate substrate. Positions 473-498 (DTLDPNDKKQRDNEDTLADKFFGDKG) are disordered.

The protein belongs to the RuBisCO large chain family. Type I subfamily. In terms of assembly, heterohexadecamer of 8 large chains and 8 small chains; disulfide-linked. The disulfide link is formed within the large subunit homodimers. Requires Mg(2+) as cofactor. Post-translationally, the disulfide bond which can form in the large chain dimeric partners within the hexadecamer appears to be associated with oxidative stress and protein turnover.

It is found in the plastid. The catalysed reaction is 2 (2R)-3-phosphoglycerate + 2 H(+) = D-ribulose 1,5-bisphosphate + CO2 + H2O. It catalyses the reaction D-ribulose 1,5-bisphosphate + O2 = 2-phosphoglycolate + (2R)-3-phosphoglycerate + 2 H(+). Its function is as follows. RuBisCO catalyzes two reactions: the carboxylation of D-ribulose 1,5-bisphosphate, the primary event in carbon dioxide fixation, as well as the oxidative fragmentation of the pentose substrate in the photorespiration process. Both reactions occur simultaneously and in competition at the same active site. The polypeptide is Ribulose bisphosphate carboxylase large chain (Cuscuta exaltata (Tall dodder)).